Here is a 715-residue protein sequence, read N- to C-terminus: Fatty acid oxidation complex subunit alpha (715 aa).

The segment at 1–190 (MTTTSAFMLN…KAGLVDDVVP (190 aa)) is enoyl-CoA hydratase. The tract at residues 306 to 715 (GPLNSVGILG…WTNGETDQGN (410 aa)) is 3-hydroxyacyl-CoA dehydrogenase.

This sequence in the N-terminal section; belongs to the enoyl-CoA hydratase/isomerase family. In the central section; belongs to the 3-hydroxyacyl-CoA dehydrogenase family. As to quaternary structure, heterotetramer of two alpha chains (FadJ) and two beta chains (FadI).

Its subcellular location is the cytoplasm. It carries out the reaction a (3S)-3-hydroxyacyl-CoA = a (2E)-enoyl-CoA + H2O. The enzyme catalyses a 4-saturated-(3S)-3-hydroxyacyl-CoA = a (3E)-enoyl-CoA + H2O. The catalysed reaction is a (3S)-3-hydroxyacyl-CoA + NAD(+) = a 3-oxoacyl-CoA + NADH + H(+). It catalyses the reaction (3S)-3-hydroxybutanoyl-CoA = (3R)-3-hydroxybutanoyl-CoA. Its pathway is lipid metabolism; fatty acid beta-oxidation. Its function is as follows. Catalyzes the formation of a hydroxyacyl-CoA by addition of water on enoyl-CoA. Also exhibits 3-hydroxyacyl-CoA epimerase and 3-hydroxyacyl-CoA dehydrogenase activities. The protein is Fatty acid oxidation complex subunit alpha of Salmonella gallinarum (strain 287/91 / NCTC 13346).